The sequence spans 606 residues: MLLSQTRGRLPSTLRSFSRRALSTTLPRGKDSEETALNKVSRNVTQPISQGASQAMLYATGLTEEDMNKAQVGISSVWYNGNPCNMHLLDLSNRVREGVQKAGLVGFQFNTVGVSDAISMGTKGMRYSLQSRDLIADSIETVMGGQWYDANISIPGCDKNMPGVLMAMGRVNRPSLMVYGGTIKPGCARTQNNADIDIVSAFQAYGQFLTGEITENQRFDIIRNACPGGGACGGMYTANTMATAIEVMGMTLPGSSSNPAESKAKDLECLAAGEAIKRLLKEDIRPSDILTRQAFENAMIVVNITGGSTNAVLHLIAIADSVGIKLDIEDFQKVSDRTPFLADLKPSGKYVMADLHNIGGTPSLLKFLLKEGVIDGSGMTVTGETLAKNLEKVPDFPADQKIIRPLSNPIKKTGHIQILRGSLAPGGSVGKITGKEGTRFVGKARVFDDEDDFIAALERNEIKKEEKTVVVIRYTGPKGGPGMPEMLKPSSALMGAGLGSSCALITDGRFSGGSHGFLIGHIVPEAAVGGPIGLVKDGDTITIDAEKRLLDLDVDETELARRRKEWEALRDAGKLPQTGLTMRGTLGKYARTVKDASHGCITDSVE.

Cys84 contacts [2Fe-2S] cluster. Residue Asp116 participates in Mg(2+) binding. [2Fe-2S] cluster is bound at residue Cys157. Asp158 serves as a coordination point for Mg(2+). A [2Fe-2S] cluster-binding site is contributed by Cys232. Mg(2+) is bound at residue Glu485. Residue Ser511 is the Proton acceptor of the active site.

The protein belongs to the IlvD/Edd family. It depends on [2Fe-2S] cluster as a cofactor. Mg(2+) serves as cofactor.

The protein resides in the mitochondrion. The enzyme catalyses (2R)-2,3-dihydroxy-3-methylbutanoate = 3-methyl-2-oxobutanoate + H2O. The catalysed reaction is (2R,3R)-2,3-dihydroxy-3-methylpentanoate = (S)-3-methyl-2-oxopentanoate + H2O. Its pathway is amino-acid biosynthesis; L-isoleucine biosynthesis; L-isoleucine from 2-oxobutanoate: step 3/4. The protein operates within amino-acid biosynthesis; L-valine biosynthesis; L-valine from pyruvate: step 3/4. With respect to regulation, DHAD activity is inhibited in dose-dependent manner by 2-hydroxy-3-methylbutyric acid with an IC(50) of about 8 mM. Dihydroxyacid dehydratase that catalyzes the third step in the common pathway leading to biosynthesis of branched-chain amino acids. Catalyzes the dehydration of (2R,3R)-2,3-dihydroxy-3-methylpentanoate (2,3-dihydroxy-3-methylvalerate) into 2-oxo-3-methylpentanoate (2-oxo-3-methylvalerate) and of (2R)-2,3-dihydroxy-3-methylbutanoate (2,3-dihydroxyisovalerate) into 2-oxo-3-methylbutanoate (2-oxoisovalerate), the penultimate precursor to L-isoleucine and L-valine, respectively. IlvC and the branched-chain amino acid biosynthesis are crucial for virulence and may be a potential target to develop antifungal agents. The chain is Dihydroxy-acid dehydratase ilvC, mitochondrial from Aspergillus fumigatus (strain ATCC MYA-4609 / CBS 101355 / FGSC A1100 / Af293) (Neosartorya fumigata).